The chain runs to 905 residues: Protein translocase subunit SecA (905 aa).

ATP-binding positions include Q87, G105–T109, and D512. A disordered region spans residues R565–S584. 4 residues coordinate Zn(2+): C886, C888, C897, and H898.

This sequence belongs to the SecA family. As to quaternary structure, monomer and homodimer. Part of the essential Sec protein translocation apparatus which comprises SecA, SecYEG and auxiliary proteins SecDF-YajC and YidC. It depends on Zn(2+) as a cofactor.

Its subcellular location is the cell inner membrane. It localises to the cytoplasm. It catalyses the reaction ATP + H2O + cellular proteinSide 1 = ADP + phosphate + cellular proteinSide 2.. Its function is as follows. Part of the Sec protein translocase complex. Interacts with the SecYEG preprotein conducting channel. Has a central role in coupling the hydrolysis of ATP to the transfer of proteins into and across the cell membrane, serving both as a receptor for the preprotein-SecB complex and as an ATP-driven molecular motor driving the stepwise translocation of polypeptide chains across the membrane. The protein is Protein translocase subunit SecA of Haemophilus ducreyi (strain 35000HP / ATCC 700724).